Consider the following 342-residue polypeptide: MSKQPGQQRPSPISATVDFEADGVQHGFLKLPISNDESAWGAVMIPVTVVKRGEGPTALLTGGNHGDEYEGITALQKLSSRLRAEDVQGRVIIVPMMNTPACTAGRRTSPMDGGNLNRSFPGDPDGSVTEKIADYFTRVLVPMSDVVLDLHSGGRTLDIIPFAASHVLDDAEQQRRALEGAKAFGAPYAIMMFELDAEALFDTAVERQGKIFVATELGGGGTSTPESLAITERGIDNFLVHYGLVEGELQVPDEPQIYLDMPDASCYVQSEHTGLLELTVALGDPVTQGQVIARVYDMTRSGVAPVEYRAERDGVLAARRFPASVNMGDTIAVIAEVVESLG.

Positions 103-124 (TAGRRTSPMDGGNLNRSFPGDP) are disordered.

It belongs to the DoeB deacetylase family. The cofactor is Zn(2+).

It is found in the cytoplasm. The enzyme catalyses (2S)-2-acetamido-4-aminobutanoate + H2O = L-2,4-diaminobutanoate + acetate. Its function is as follows. Involved in the degradation of ectoine, which allows H.elongata to utilize ectoine as both a carbon and a nitrogen source for growth. Catalyzes the deacetylation of N-alpha-acetyl-L-2,4-diaminobutyrate (N-alpha-Ac-DABA) to yield L-2,4-diaminobutyrate (DABA). This Halomonas elongata (strain ATCC 33173 / DSM 2581 / NBRC 15536 / NCIMB 2198 / 1H9) protein is N-alpha-acetyl-L-2,4-diaminobutyric acid deacetylase.